The chain runs to 394 residues: Protein BUR2 (394 aa).

Disordered regions lie at residues 1–32 (MVLS…GNPQ) and 372–394 (MSER…KPRF). Residues 9 to 32 (IANSQPSGNGKTSLDIKQNEGNPQ) are compositionally biased toward polar residues. Residues 372-381 (MSERSIKRPS) are compositionally biased toward basic and acidic residues.

Belongs to the BUR kinase complex.

It localises to the nucleus. Functionally, component of the BUR kinase complex involved in transcription regulation. This complex phosphorylates the UBC2/RAD6 ubiquitin-conjugating enzyme (E2), leading to monoubiquitination of histone H2B and the silencing of telomeric-associated genes. Also required for histone H3 methylation. Necessary for the recovery from pheromone-induced growth arrest in the cell cycle G1 phase. The kinase activity of the complex requires the presence of BUR2. Overexpression of BUR2 interferes with mitotic chromosome segregation. This chain is Protein BUR2 (BUR2), found in Kluyveromyces lactis (strain ATCC 8585 / CBS 2359 / DSM 70799 / NBRC 1267 / NRRL Y-1140 / WM37) (Yeast).